Consider the following 117-residue polypeptide: Class I hydrophobin 2 (117 aa).

An N-terminal signal peptide occupies residues 1–21 (EIVSLSLSLLAVVPLVVLVIA). 4 cysteine pairs are disulfide-bonded: Cys-35/Cys-96, Cys-42/Cys-90, Cys-43/Cys-76, and Cys-97/Cys-110.

The protein belongs to the fungal hydrophobin family. Self-assembles to form functional amyloid fibrils called rodlets. Self-assembly into fibrillar rodlets occurs spontaneously at hydrophobic:hydrophilic interfaces and the rodlets further associate laterally to form amphipathic monolayers.

The protein resides in the secreted. It is found in the cell wall. In terms of biological role, aerial growth, conidiation, and dispersal of filamentous fungi in the environment rely upon a capability of their secreting small amphipathic proteins called hydrophobins (HPBs) with low sequence identity. Class I can self-assemble into an outermost layer of rodlet bundles on aerial cell surfaces, conferring cellular hydrophobicity that supports fungal growth, development and dispersal; whereas Class II form highly ordered films at water-air interfaces through intermolecular interactions but contribute nothing to the rodlet structure. In Pisolithus tinctorius (Dead man's foot), this protein is Class I hydrophobin 2.